Consider the following 208-residue polypeptide: Uracil phosphoribosyltransferase (208 aa).

5-phospho-alpha-D-ribose 1-diphosphate-binding positions include arginine 78, arginine 103, and 130–138 (DPMLATGGS). Uracil is bound by residues isoleucine 193 and 198–200 (GDA). Residue aspartate 199 coordinates 5-phospho-alpha-D-ribose 1-diphosphate.

This sequence belongs to the UPRTase family. It depends on Mg(2+) as a cofactor.

It catalyses the reaction UMP + diphosphate = 5-phospho-alpha-D-ribose 1-diphosphate + uracil. It functions in the pathway pyrimidine metabolism; UMP biosynthesis via salvage pathway; UMP from uracil: step 1/1. Its activity is regulated as follows. Allosterically activated by GTP. Functionally, catalyzes the conversion of uracil and 5-phospho-alpha-D-ribose 1-diphosphate (PRPP) to UMP and diphosphate. The chain is Uracil phosphoribosyltransferase from Aliivibrio fischeri (strain MJ11) (Vibrio fischeri).